We begin with the raw amino-acid sequence, 336 residues long: Atypical chemokine receptor 1 (336 aa).

The Extracellular segment spans residues 1 to 63; the sequence is MGNCLHQAEL…CNLLDDSSLP (63 aa). N-linked (GlcNAc...) asparagine glycans are attached at residues Asn16, Asn27, and Asn33. Disulfide bonds link Cys51–Cys276 and Cys129–Cys195. Residues 64-84 traverse the membrane as a helical segment; that stretch reads FFILASVLGILASSTVLFLLF. Topologically, residues 85-95 are cytoplasmic; it reads RPLFRWQLCPG. The chain crosses the membrane as a helical span at residues 96 to 116; the sequence is WPVLAQLAVGSTLFSIVVPIL. At 117 to 129 the chain is on the extracellular side; the sequence is APGLGNTRSSAPC. The helical transmembrane segment at 130–153 threads the bilayer; that stretch reads SLGYCVWYGSAFAQALLLGCHASL. The Cytoplasmic segment spans residues 154–166; that stretch reads GPKLGAGQVPGLT. A helical transmembrane segment spans residues 167 to 187; that stretch reads LGLSVGLWGAAALLTLPITLA. The Extracellular segment spans residues 188–207; the sequence is SDASDGLCTPIYSTELKALQ. The helical transmembrane segment at 208–228 threads the bilayer; sequence ATHTVACFAIFVLLPLGLFGA. At 229-244 the chain is on the cytoplasmic side; sequence KGLKKVLGMGPGPWMN. A helical membrane pass occupies residues 245 to 265; that stretch reads ILWVWFIFWWPHGVVLGLDFL. Residues 266–287 are Extracellular-facing; sequence VRSKLLLLPTCLAQQVLDLLLN. The chain crosses the membrane as a helical span at residues 288-308; that stretch reads LAEALAIVHCVATPLLLALFC. Residues 309–336 are Cytoplasmic-facing; that stretch reads HQATRTLVPSLPLPERWSSPVDTLGSKS.

The protein belongs to the G-protein coupled receptor 1 family. Atypical chemokine receptor subfamily.

Its subcellular location is the early endosome. The protein localises to the recycling endosome. It is found in the membrane. In terms of biological role, atypical chemokine receptor that controls chemokine levels and localization via high-affinity chemokine binding that is uncoupled from classic ligand-driven signal transduction cascades, resulting instead in chemokine sequestration, degradation, or transcytosis. Also known as interceptor (internalizing receptor) or chemokine-scavenging receptor or chemokine decoy receptor. Has a promiscuous chemokine-binding profile, interacting with inflammatory chemokines of both the CXC and the CC subfamilies but not with homeostatic chemokines. Acts as a receptor for chemokines including CCL2, CCL5, CCL7, CCL11, CCL13, CCL14, CCL17, CXCL5, CXCL6, IL8/CXCL8, CXCL11, GRO, RANTES, MCP-1 and TARC. May regulate chemokine bioavailability and, consequently, leukocyte recruitment through two distinct mechanisms: when expressed in endothelial cells, it sustains the abluminal to luminal transcytosis of tissue-derived chemokines and their subsequent presentation to circulating leukocytes; when expressed in erythrocytes, serves as blood reservoir of cognate chemokines but also as a chemokine sink, buffering potential surges in plasma chemokine levels. The sequence is that of Atypical chemokine receptor 1 (ACKR1) from Saguinus imperator (Emperor tamarin).